Consider the following 101-residue polypeptide: Urease subunit beta (101 aa).

The protein belongs to the urease beta subunit family. Heterotrimer of UreA (gamma), UreB (beta) and UreC (alpha) subunits. Three heterotrimers associate to form the active enzyme.

The protein localises to the cytoplasm. It carries out the reaction urea + 2 H2O + H(+) = hydrogencarbonate + 2 NH4(+). The protein operates within nitrogen metabolism; urea degradation; CO(2) and NH(3) from urea (urease route): step 1/1. The polypeptide is Urease subunit beta (Paraburkholderia phymatum (strain DSM 17167 / CIP 108236 / LMG 21445 / STM815) (Burkholderia phymatum)).